Here is a 393-residue protein sequence, read N- to C-terminus: NAD(P)H-quinone oxidoreductase subunit H, chloroplastic (393 aa).

The protein belongs to the complex I 49 kDa subunit family. In terms of assembly, NDH is composed of at least 16 different subunits, 5 of which are encoded in the nucleus.

Its subcellular location is the plastid. The protein localises to the chloroplast thylakoid membrane. It catalyses the reaction a plastoquinone + NADH + (n+1) H(+)(in) = a plastoquinol + NAD(+) + n H(+)(out). The enzyme catalyses a plastoquinone + NADPH + (n+1) H(+)(in) = a plastoquinol + NADP(+) + n H(+)(out). Its function is as follows. NDH shuttles electrons from NAD(P)H:plastoquinone, via FMN and iron-sulfur (Fe-S) centers, to quinones in the photosynthetic chain and possibly in a chloroplast respiratory chain. The immediate electron acceptor for the enzyme in this species is believed to be plastoquinone. Couples the redox reaction to proton translocation, and thus conserves the redox energy in a proton gradient. The sequence is that of NAD(P)H-quinone oxidoreductase subunit H, chloroplastic from Huperzia lucidula (Shining clubmoss).